A 74-amino-acid polypeptide reads, in one-letter code: Defensin-like protein P322 (74 aa).

Residues 1 to 19 (MRFFATFFLLAMLVVATKM) form the signal peptide. Intrachain disulfides connect C30-C74, C41-C61, C47-C68, and C51-C70.

The protein belongs to the DEFL family. Protease inhibitor I18 (RTI/MTI-2) subfamily. Tuber.

It is found in the secreted. The protein is Defensin-like protein P322 of Solanum tuberosum (Potato).